Consider the following 381-residue polypeptide: L-lactate dehydrogenase A-like 6B (381 aa).

Residues D101–K106 and R148 each bind NAD(+). Substrate is bound by residues R155, N187, and R218. N187 contributes to the NAD(+) binding site. The Proton acceptor role is filled by H242. T297 contributes to the substrate binding site.

The protein belongs to the LDH/MDH superfamily. LDH family. In terms of tissue distribution, testis specific.

It carries out the reaction (S)-lactate + NAD(+) = pyruvate + NADH + H(+). Its pathway is fermentation; pyruvate fermentation to lactate; (S)-lactate from pyruvate: step 1/1. The polypeptide is L-lactate dehydrogenase A-like 6B (LDHAL6B) (Homo sapiens (Human)).